The following is a 733-amino-acid chain: Phosphoribosylformylglycinamidine synthase subunit PurL (733 aa).

H32 is a catalytic residue. Y35 contacts ATP. E81 contributes to the Mg(2+) binding site. Residues 82–85 (SHNH) and R104 contribute to the substrate site. The Proton acceptor role is filled by H83. D105 is a Mg(2+) binding site. Position 230 (Q230) interacts with substrate. D258 is a binding site for Mg(2+). 301–303 (ESQ) serves as a coordination point for substrate. Positions 482 and 519 each coordinate ATP. N520 is a binding site for Mg(2+). Residue S522 coordinates substrate.

Belongs to the FGAMS family. In terms of assembly, monomer. Part of the FGAM synthase complex composed of 1 PurL, 1 PurQ and 2 PurS subunits.

It is found in the cytoplasm. The enzyme catalyses N(2)-formyl-N(1)-(5-phospho-beta-D-ribosyl)glycinamide + L-glutamine + ATP + H2O = 2-formamido-N(1)-(5-O-phospho-beta-D-ribosyl)acetamidine + L-glutamate + ADP + phosphate + H(+). It functions in the pathway purine metabolism; IMP biosynthesis via de novo pathway; 5-amino-1-(5-phospho-D-ribosyl)imidazole from N(2)-formyl-N(1)-(5-phospho-D-ribosyl)glycinamide: step 1/2. Functionally, part of the phosphoribosylformylglycinamidine synthase complex involved in the purines biosynthetic pathway. Catalyzes the ATP-dependent conversion of formylglycinamide ribonucleotide (FGAR) and glutamine to yield formylglycinamidine ribonucleotide (FGAM) and glutamate. The FGAM synthase complex is composed of three subunits. PurQ produces an ammonia molecule by converting glutamine to glutamate. PurL transfers the ammonia molecule to FGAR to form FGAM in an ATP-dependent manner. PurS interacts with PurQ and PurL and is thought to assist in the transfer of the ammonia molecule from PurQ to PurL. This chain is Phosphoribosylformylglycinamidine synthase subunit PurL, found in Methanocaldococcus jannaschii (strain ATCC 43067 / DSM 2661 / JAL-1 / JCM 10045 / NBRC 100440) (Methanococcus jannaschii).